Here is a 64-residue protein sequence, read N- to C-terminus: Prokaryotic ubiquitin-like protein Pup (64 aa).

Residues 1 to 11 (MAQEQTKRGGG) are compositionally biased toward basic and acidic residues. The disordered stretch occupies residues 1 to 36 (MAQEQTKRGGGGDDDDVTDLGGPAGQERREKLAEDT). An ARC ATPase binding region spans residues 21 to 58 (GGPAGQERREKLAEDTDDLLDEIDDVLEENAEDFVRAY). Residues 24 to 52 (AGQERREKLAEDTDDLLDEIDDVLEENAE) adopt a coiled-coil conformation. Position 64 is a deamidated glutamine (glutamine 64). Residue glutamine 64 forms an Isoglutamyl lysine isopeptide (Gln-Lys) (interchain with K-? in acceptor proteins) linkage.

The protein belongs to the prokaryotic ubiquitin-like protein family. In terms of assembly, strongly interacts with the proteasome-associated ATPase ARC through a hydrophobic interface; the interacting region of Pup lies in its C-terminal half. There is one Pup binding site per ARC hexamer ring. In terms of processing, is modified by deamidation of its C-terminal glutamine to glutamate by the deamidase Dop, a prerequisite to the subsequent pupylation process.

It functions in the pathway protein degradation; proteasomal Pup-dependent pathway. Protein modifier that is covalently attached to lysine residues of substrate proteins, thereby targeting them for proteasomal degradation. The tagging system is termed pupylation. In Mycobacteroides abscessus (strain ATCC 19977 / DSM 44196 / CCUG 20993 / CIP 104536 / JCM 13569 / NCTC 13031 / TMC 1543 / L948) (Mycobacterium abscessus), this protein is Prokaryotic ubiquitin-like protein Pup.